The sequence spans 297 residues: Carbamate kinase (297 aa).

It belongs to the carbamate kinase family.

It localises to the cytoplasm. It catalyses the reaction hydrogencarbonate + NH4(+) + ATP = carbamoyl phosphate + ADP + H2O + H(+). It carries out the reaction carbamate + ATP = carbamoyl phosphate + ADP. The catalysed reaction is hydrogencarbonate + NH4(+) = carbamate + H2O + H(+). The protein operates within nitrogen metabolism; (S)-allantoin degradation. In terms of biological role, kinase involved in the anaerobic nitrogen utilization via the assimilation of allantoin. Catalyzes the transfer of a phosphate group from carbamoyl phosphate to ADP to produce ATP and leave carbamate, which spontaneously hydrolyzes to ammonia and hydrogencarbonate. The sequence is that of Carbamate kinase from Escherichia coli (strain K12).